Here is a 192-residue protein sequence, read N- to C-terminus: Xanthine phosphoribosyltransferase (192 aa).

Xanthine is bound by residues L20 and N27. Position 128-132 (128-132 (ANGDA)) interacts with 5-phospho-alpha-D-ribose 1-diphosphate. A xanthine-binding site is contributed by K156.

This sequence belongs to the purine/pyrimidine phosphoribosyltransferase family. Xpt subfamily. As to quaternary structure, homodimer.

It localises to the cytoplasm. The catalysed reaction is XMP + diphosphate = xanthine + 5-phospho-alpha-D-ribose 1-diphosphate. It participates in purine metabolism; XMP biosynthesis via salvage pathway; XMP from xanthine: step 1/1. Its function is as follows. Converts the preformed base xanthine, a product of nucleic acid breakdown, to xanthosine 5'-monophosphate (XMP), so it can be reused for RNA or DNA synthesis. This Staphylococcus aureus (strain bovine RF122 / ET3-1) protein is Xanthine phosphoribosyltransferase.